We begin with the raw amino-acid sequence, 498 residues long: Aldehyde dehydrogenase, mitochondrial (498 aa).

The transit peptide at M1–L9 directs the protein to the mitochondrion. G242 to G247 lines the NAD(+) pocket. E265 (proton acceptor) is an active-site residue. C299 functions as the Nucleophile in the catalytic mechanism.

Belongs to the aldehyde dehydrogenase family.

It localises to the mitochondrion. The enzyme catalyses an aldehyde + NAD(+) + H2O = a carboxylate + NADH + 2 H(+). The protein operates within alcohol metabolism; ethanol degradation; acetate from ethanol: step 2/2. Functionally, could have an RNA-binding activity in addition of its catalytic role. The chain is Aldehyde dehydrogenase, mitochondrial (ALDH2) from Leishmania tarentolae (Sauroleishmania tarentolae).